We begin with the raw amino-acid sequence, 147 residues long: Large ribosomal subunit protein uL15 (147 aa).

The segment at 20–54 (GRGIGSGKGKTSGKGHKGQKARGTGKVHPWFEGGQ) is disordered. The segment covering 30–44 (TSGKGHKGQKARGTG) has biased composition (basic residues).

The protein belongs to the universal ribosomal protein uL15 family. Part of the 50S ribosomal subunit.

Its function is as follows. Binds to the 23S rRNA. This is Large ribosomal subunit protein uL15 from Thermosipho africanus (strain TCF52B).